The chain runs to 142 residues: Large ribosomal subunit protein uL13 (142 aa).

The protein belongs to the universal ribosomal protein uL13 family. In terms of assembly, part of the 50S ribosomal subunit.

Functionally, this protein is one of the early assembly proteins of the 50S ribosomal subunit, although it is not seen to bind rRNA by itself. It is important during the early stages of 50S assembly. The sequence is that of Large ribosomal subunit protein uL13 from Hamiltonella defensa subsp. Acyrthosiphon pisum (strain 5AT).